We begin with the raw amino-acid sequence, 198 residues long: Recombination protein RecR (198 aa).

The C4-type zinc finger occupies 57 to 72 (CSICGNLTDEDPCAIC). In terms of domain architecture, Toprim spans 80–175 (STILIVEDSR…KVTRLARGLA (96 aa)).

Belongs to the RecR family.

Functionally, may play a role in DNA repair. It seems to be involved in an RecBC-independent recombinational process of DNA repair. It may act with RecF and RecO. This chain is Recombination protein RecR, found in Streptococcus gordonii (strain Challis / ATCC 35105 / BCRC 15272 / CH1 / DL1 / V288).